The sequence spans 101 residues: Fructose-bisphosphate aldolase (101 aa).

Catalysis depends on lysine 11, which acts as the Schiff-base intermediate with dihydroxyacetone-P.

Belongs to the class I fructose-bisphosphate aldolase family.

The enzyme catalyses beta-D-fructose 1,6-bisphosphate = D-glyceraldehyde 3-phosphate + dihydroxyacetone phosphate. Its pathway is carbohydrate degradation; glycolysis; D-glyceraldehyde 3-phosphate and glycerone phosphate from D-glucose: step 4/4. The sequence is that of Fructose-bisphosphate aldolase from Lymnaea stagnalis (Great pond snail).